The sequence spans 211 residues: MNNIYTTSISLKRKTGDFIIKKEQLSTKDIKEMVMVIREIFKMRGLERVTRELKGFIHNFPSGSYIKFTLKVDHDFSVISSGGGLLGYISDSVYDAYDTFVFSNVDSYLPGKPLKSIDELRFKWTNIQQIVPLLEYQADPSILSKSRDYSTHIDYSCNNHVHPIKVNFSPKQISTQHSLHQQIEKDNLKLSSSPKLKSKEGIVGSPTARAF.

This is an uncharacterized protein from Dictyostelium discoideum (Social amoeba).